Consider the following 462-residue polypeptide: Bifunctional protein GlmU (462 aa).

Residues Met1 to Gln239 are pyrophosphorylase. UDP-N-acetyl-alpha-D-glucosamine contacts are provided by residues Leu17–Gly20, Lys31, Gln84, and Gly89–Thr90. Asp114 is a Mg(2+) binding site. UDP-N-acetyl-alpha-D-glucosamine contacts are provided by Gly150, Glu165, Asn180, and Asn237. Asn237 serves as a coordination point for Mg(2+). Positions Ala240–Asp260 are linker. The tract at residues Gly261–Ala462 is N-acetyltransferase. 2 residues coordinate UDP-N-acetyl-alpha-D-glucosamine: Arg326 and Lys344. His356 functions as the Proton acceptor in the catalytic mechanism. 2 residues coordinate UDP-N-acetyl-alpha-D-glucosamine: Tyr359 and Asn370. Residues Ala373, Asn379 to Tyr380, Ser398, Ser416, and Arg433 contribute to the acetyl-CoA site.

It in the N-terminal section; belongs to the N-acetylglucosamine-1-phosphate uridyltransferase family. In the C-terminal section; belongs to the transferase hexapeptide repeat family. In terms of assembly, homotrimer. The cofactor is Mg(2+).

The protein localises to the cytoplasm. It catalyses the reaction alpha-D-glucosamine 1-phosphate + acetyl-CoA = N-acetyl-alpha-D-glucosamine 1-phosphate + CoA + H(+). The enzyme catalyses N-acetyl-alpha-D-glucosamine 1-phosphate + UTP + H(+) = UDP-N-acetyl-alpha-D-glucosamine + diphosphate. It participates in nucleotide-sugar biosynthesis; UDP-N-acetyl-alpha-D-glucosamine biosynthesis; N-acetyl-alpha-D-glucosamine 1-phosphate from alpha-D-glucosamine 6-phosphate (route II): step 2/2. It functions in the pathway nucleotide-sugar biosynthesis; UDP-N-acetyl-alpha-D-glucosamine biosynthesis; UDP-N-acetyl-alpha-D-glucosamine from N-acetyl-alpha-D-glucosamine 1-phosphate: step 1/1. The protein operates within bacterial outer membrane biogenesis; LPS lipid A biosynthesis. Its function is as follows. Catalyzes the last two sequential reactions in the de novo biosynthetic pathway for UDP-N-acetylglucosamine (UDP-GlcNAc). The C-terminal domain catalyzes the transfer of acetyl group from acetyl coenzyme A to glucosamine-1-phosphate (GlcN-1-P) to produce N-acetylglucosamine-1-phosphate (GlcNAc-1-P), which is converted into UDP-GlcNAc by the transfer of uridine 5-monophosphate (from uridine 5-triphosphate), a reaction catalyzed by the N-terminal domain. The chain is Bifunctional protein GlmU from Caulobacter vibrioides (strain ATCC 19089 / CIP 103742 / CB 15) (Caulobacter crescentus).